The sequence spans 415 residues: Mulatexin (415 aa).

The N-terminal stretch at 1 to 21 is a signal peptide; that stretch reads MKFRTLLIIFSLVFLLEIVSA. The region spanning 23–66 is the Chitin-binding type-1 1 domain; it reads EPQCGRDAGGALCHGNLCCSHWGFCGTTAIYCDVDQGCQSQCWS. Disulfide bonds link cysteine 26/cysteine 41, cysteine 35/cysteine 47, cysteine 40/cysteine 54, and cysteine 60/cysteine 64. The disordered stretch occupies residues 65–127; the sequence is WSSPPPPSPP…PGGPERPDHR (63 aa). The span at 67 to 121 shows a compositional bias: pro residues; sequence SPPPPSPPPPPPSPPPPSPPPPSPPPPSPPPPSPPPPSPPPPSPPPPSPPPPGGP. Residues 125 to 167 form the Chitin-binding type-1 2 domain; sequence DHRCGRALGNPPCNPGRCCSIHNWCGSTAAYCRGSSCQYQCWN. Disulfide bonds link cysteine 128/cysteine 143, cysteine 137/cysteine 149, cysteine 142/cysteine 156, and cysteine 161/cysteine 165. An N-linked (GlcNAc...) asparagine glycan is attached at asparagine 264.

Post-translationally, glycosylated.

The protein resides in the secreted. Its function is as follows. Chitin-binding protein which slows larval growth when consumed by the lepidopteran species S.ricini and M.brassica, but not when consumed by the mulberry specialist B.mori. Lacks chitinase activity. The polypeptide is Mulatexin (Morus alba (White mulberry)).